We begin with the raw amino-acid sequence, 197 residues long: NADH-quinone oxidoreductase subunit C (197 aa).

It belongs to the complex I 30 kDa subunit family. NDH-1 is composed of 14 different subunits. Subunits NuoB, C, D, E, F, and G constitute the peripheral sector of the complex.

It is found in the cell inner membrane. It carries out the reaction a quinone + NADH + 5 H(+)(in) = a quinol + NAD(+) + 4 H(+)(out). In terms of biological role, NDH-1 shuttles electrons from NADH, via FMN and iron-sulfur (Fe-S) centers, to quinones in the respiratory chain. The immediate electron acceptor for the enzyme in this species is believed to be ubiquinone. Couples the redox reaction to proton translocation (for every two electrons transferred, four hydrogen ions are translocated across the cytoplasmic membrane), and thus conserves the redox energy in a proton gradient. This is NADH-quinone oxidoreductase subunit C from Neisseria meningitidis serogroup C (strain 053442).